The following is a 74-amino-acid chain: Peptide ToAP4 (74 aa).

The N-terminal stretch at 1–22 is a signal peptide; sequence MQIKHLITLFFLVLIVADQCSA. Lysine amide is present on Lys39. The propeptide occupies 40–74; sequence GGRRKREIAAQIEQYRDLQKREAELEELLDRLPMF.

Belongs to the non-disulfide-bridged peptide (NDBP) superfamily. Short antimicrobial peptide (group 4) family. As to expression, expressed by the venom gland.

It is found in the secreted. Its function is as follows. Shows anti-inflammatory activities, since it decreases release of pro-inflammatory cytokines, and increases release of anti-inflammatory cytokines. Acts by blocking the Toll-like receptor 4 (TLR4). Also increases MHC-II expression in LPS-stimulated cells. Does not show antibacterial activity on Mycobacterium abscessus subsp. massiliense. Does not show antifungal activity. Has low hemolytic activity on human erythrocyte and low monocyte cytotoxicity. In vivo, does not induce immune cell migration. Helical wheel projections predict an amphipathic peptide with distinct hydrophobic and hydrophilic faces. This chain is Peptide ToAP4, found in Tityus obscurus (Amazonian scorpion).